A 380-amino-acid polypeptide reads, in one-letter code: Cytochrome b (380 aa).

4 consecutive transmembrane segments (helical) span residues 33–53 (FGSL…FLAM), 77–98 (WLIR…YLHI), 113–133 (WTIG…GYVL), and 178–198 (FFAF…IHLL). Positions 83 and 97 each coordinate heme b. Residues His-182 and His-196 each contribute to the heme b site. His-201 is an a ubiquinone binding site. 4 helical membrane passes run 226-246 (YKDL…ALFS), 288-308 (LGGV…PFLH), 320-340 (VTQF…WIGG), and 347-367 (FVII…VLIP).

The protein belongs to the cytochrome b family. The cytochrome bc1 complex contains 3 respiratory subunits (MT-CYB, CYC1 and UQCRFS1), 2 core proteins (UQCRC1 and UQCRC2) and probably 6 low-molecular weight proteins. Requires heme b as cofactor.

Its subcellular location is the mitochondrion inner membrane. Component of the ubiquinol-cytochrome c reductase complex (complex III or cytochrome b-c1 complex) that is part of the mitochondrial respiratory chain. The b-c1 complex mediates electron transfer from ubiquinol to cytochrome c. Contributes to the generation of a proton gradient across the mitochondrial membrane that is then used for ATP synthesis. In Kareius bicoloratus (Stone flounder), this protein is Cytochrome b (mt-cyb).